Consider the following 162-residue polypeptide: NADH-quinone oxidoreductase subunit I (162 aa).

4Fe-4S ferredoxin-type domains follow at residues 52–82 (LRRYPNGEERCIACKLCEAICPAQAITIEAG) and 93–122 (TRYDIDMVKCIYCGMCQEACPVDAIVEGPN). Residues C62, C65, C68, C72, C102, C105, C108, and C112 each coordinate [4Fe-4S] cluster.

It belongs to the complex I 23 kDa subunit family. As to quaternary structure, NDH-1 is composed of 14 different subunits. Subunits NuoA, H, J, K, L, M, N constitute the membrane sector of the complex. [4Fe-4S] cluster serves as cofactor.

The protein localises to the cell inner membrane. The enzyme catalyses a quinone + NADH + 5 H(+)(in) = a quinol + NAD(+) + 4 H(+)(out). Functionally, NDH-1 shuttles electrons from NADH, via FMN and iron-sulfur (Fe-S) centers, to quinones in the respiratory chain. The immediate electron acceptor for the enzyme in this species is believed to be ubiquinone. Couples the redox reaction to proton translocation (for every two electrons transferred, four hydrogen ions are translocated across the cytoplasmic membrane), and thus conserves the redox energy in a proton gradient. The protein is NADH-quinone oxidoreductase subunit I of Methylorubrum populi (strain ATCC BAA-705 / NCIMB 13946 / BJ001) (Methylobacterium populi).